The sequence spans 217 residues: Large ribosomal subunit protein uL4 (217 aa).

Positions 42–100 (RAAARQGTHSTKTRGDVSGGGRKPYRQKGTGRARQGSTRAPQFTGGGVVHGPKPRDYSQ) are disordered.

The protein belongs to the universal ribosomal protein uL4 family. As to quaternary structure, part of the 50S ribosomal subunit.

Its function is as follows. One of the primary rRNA binding proteins, this protein initially binds near the 5'-end of the 23S rRNA. It is important during the early stages of 50S assembly. It makes multiple contacts with different domains of the 23S rRNA in the assembled 50S subunit and ribosome. Functionally, forms part of the polypeptide exit tunnel. This Mycobacterium avium (strain 104) protein is Large ribosomal subunit protein uL4.